The following is a 230-amino-acid chain: Urease accessory protein UreF (230 aa).

It belongs to the UreF family. UreD, UreF and UreG form a complex that acts as a GTP-hydrolysis-dependent molecular chaperone, activating the urease apoprotein by helping to assemble the nickel containing metallocenter of UreC. The UreE protein probably delivers the nickel.

It is found in the cytoplasm. Required for maturation of urease via the functional incorporation of the urease nickel metallocenter. The chain is Urease accessory protein UreF from Polynucleobacter asymbioticus (strain DSM 18221 / CIP 109841 / QLW-P1DMWA-1) (Polynucleobacter necessarius subsp. asymbioticus).